We begin with the raw amino-acid sequence, 202 residues long: Imidazoleglycerol-phosphate dehydratase (202 aa).

This sequence belongs to the imidazoleglycerol-phosphate dehydratase family.

Its subcellular location is the cytoplasm. It carries out the reaction D-erythro-1-(imidazol-4-yl)glycerol 3-phosphate = 3-(imidazol-4-yl)-2-oxopropyl phosphate + H2O. It participates in amino-acid biosynthesis; L-histidine biosynthesis; L-histidine from 5-phospho-alpha-D-ribose 1-diphosphate: step 6/9. The sequence is that of Imidazoleglycerol-phosphate dehydratase from Rhizobium etli (strain ATCC 51251 / DSM 11541 / JCM 21823 / NBRC 15573 / CFN 42).